A 170-amino-acid polypeptide reads, in one-letter code: Photosystem I assembly protein Ycf3 (170 aa).

3 TPR repeats span residues 35–69 (AFTY…EIDP), 73–106 (SYIL…NPSL), and 121–154 (GEQA…APGN).

This sequence belongs to the Ycf3 family.

It is found in the plastid. The protein localises to the chloroplast thylakoid membrane. Functionally, essential for the assembly of the photosystem I (PSI) complex. May act as a chaperone-like factor to guide the assembly of the PSI subunits. This chain is Photosystem I assembly protein Ycf3, found in Cycas taitungensis (Prince sago).